Here is a 229-residue protein sequence, read N- to C-terminus: Thylakoid lumenal 19 kDa protein, chloroplastic (229 aa).

It localises to the plastid. It is found in the chloroplast thylakoid lumen. This chain is Thylakoid lumenal 19 kDa protein, chloroplastic, found in Arabidopsis thaliana (Mouse-ear cress).